Reading from the N-terminus, the 631-residue chain is 1-deoxy-D-xylulose-5-phosphate synthase (631 aa).

Residues His-87 and 128 to 130 (GHS) contribute to the thiamine diphosphate site. Asp-159 is a binding site for Mg(2+). Thiamine diphosphate is bound by residues 160 to 161 (GA), Asn-188, Phe-295, and Glu-377. Position 188 (Asn-188) interacts with Mg(2+).

The protein belongs to the transketolase family. DXPS subfamily. In terms of assembly, homodimer. The cofactor is Mg(2+). It depends on thiamine diphosphate as a cofactor.

The enzyme catalyses D-glyceraldehyde 3-phosphate + pyruvate + H(+) = 1-deoxy-D-xylulose 5-phosphate + CO2. It participates in metabolic intermediate biosynthesis; 1-deoxy-D-xylulose 5-phosphate biosynthesis; 1-deoxy-D-xylulose 5-phosphate from D-glyceraldehyde 3-phosphate and pyruvate: step 1/1. Its function is as follows. Catalyzes the acyloin condensation reaction between C atoms 2 and 3 of pyruvate and glyceraldehyde 3-phosphate to yield 1-deoxy-D-xylulose-5-phosphate (DXP). The sequence is that of 1-deoxy-D-xylulose-5-phosphate synthase from Pseudomonas putida (strain W619).